The following is an 82-amino-acid chain: uncharacterized protein (82 aa).

The span at 29–38 (TATKSTSSGS) shows a compositional bias: low complexity. Residues 29–64 (TATKSTSSGSVPSFFTESTSTPLNQSKTNTSTLNKS) form a disordered region. Positions 39–50 (VPSFFTESTSTP) are enriched in polar residues. Low complexity predominate over residues 51–64 (LNQSKTNTSTLNKS).

This is an uncharacterized protein from Dictyostelium discoideum (Social amoeba).